Consider the following 400-residue polypeptide: CCA-adding enzyme (400 aa).

2 residues coordinate ATP: Gly-28 and Arg-31. Gly-28 and Arg-31 together coordinate CTP. 2 residues coordinate Mg(2+): Asp-41 and Asp-43. 5 residues coordinate ATP: Arg-112, Asp-155, Arg-158, Arg-161, and Arg-164. Arg-112, Asp-155, Arg-158, Arg-161, and Arg-164 together coordinate CTP.

The protein belongs to the tRNA nucleotidyltransferase/poly(A) polymerase family. Bacterial CCA-adding enzyme type 3 subfamily. Homodimer. Mg(2+) is required as a cofactor.

It catalyses the reaction a tRNA precursor + 2 CTP + ATP = a tRNA with a 3' CCA end + 3 diphosphate. The catalysed reaction is a tRNA with a 3' CCA end + 2 CTP + ATP = a tRNA with a 3' CCACCA end + 3 diphosphate. Catalyzes the addition and repair of the essential 3'-terminal CCA sequence in tRNAs without using a nucleic acid template. Adds these three nucleotides in the order of C, C, and A to the tRNA nucleotide-73, using CTP and ATP as substrates and producing inorganic pyrophosphate. tRNA 3'-terminal CCA addition is required both for tRNA processing and repair. Also involved in tRNA surveillance by mediating tandem CCA addition to generate a CCACCA at the 3' terminus of unstable tRNAs. While stable tRNAs receive only 3'-terminal CCA, unstable tRNAs are marked with CCACCA and rapidly degraded. The chain is CCA-adding enzyme from Staphylococcus aureus (strain Mu3 / ATCC 700698).